Reading from the N-terminus, the 363-residue chain is Fructose-bisphosphate aldolase 1 (363 aa).

Asp-34 is a dihydroxyacetone phosphate binding site. D-glyceraldehyde 3-phosphate-binding residues include Ser-36 and Thr-39. Arg-43 lines the beta-D-fructose 1,6-bisphosphate pocket. Lys-107 contacts D-glyceraldehyde 3-phosphate. Lys-146 contributes to the dihydroxyacetone phosphate binding site. Glu-189 is a binding site for D-glyceraldehyde 3-phosphate. The active-site Proton acceptor is the Glu-189. Residues Lys-231, Ser-273, and Gly-274 each coordinate dihydroxyacetone phosphate. The active-site Schiff-base intermediate with dihydroxyacetone phosphate is Lys-231. Beta-D-fructose 1,6-bisphosphate-binding positions include 273-275 (SGG) and Ser-301. Gly-303 and Arg-304 together coordinate dihydroxyacetone phosphate. Arg-304 contributes to the beta-D-fructose 1,6-bisphosphate binding site.

Belongs to the class I fructose-bisphosphate aldolase family. Homotetramer. Component of a complex, at least composed of ald-1, microneme protein MIC2 and ACT1. Interacts with microneme protein MIC2 (via cytoplasmic tail). Interacts with ACT1 (F-actin).

The protein resides in the cytoplasm. The enzyme catalyses beta-D-fructose 1,6-bisphosphate = D-glyceraldehyde 3-phosphate + dihydroxyacetone phosphate. It functions in the pathway carbohydrate degradation; glycolysis; D-glyceraldehyde 3-phosphate and glycerone phosphate from D-glucose: step 4/4. In terms of biological role, plays a key role in glycolysis by catalyzing the cleavage of fructose 1,6-bisphosphate into dihydroxyacetone phosphate and glyceraldehyde 3-phosphate. Forms a bridge between cell surface adhesins and the actin cytoskeleton. Required for parasite invasion of host cells. The protein is Fructose-bisphosphate aldolase 1 of Toxoplasma gondii.